Reading from the N-terminus, the 130-residue chain is Small ribosomal subunit protein uS8 (130 aa).

This sequence belongs to the universal ribosomal protein uS8 family. In terms of assembly, part of the 30S ribosomal subunit. Contacts proteins S5 and S12.

Its function is as follows. One of the primary rRNA binding proteins, it binds directly to 16S rRNA central domain where it helps coordinate assembly of the platform of the 30S subunit. The sequence is that of Small ribosomal subunit protein uS8 from Marinobacter nauticus (strain ATCC 700491 / DSM 11845 / VT8) (Marinobacter aquaeolei).